We begin with the raw amino-acid sequence, 250 residues long: MLFLHDVWVNWFEGEENGYNVCHFHEWRKEDTVELLDQVPLLRVPSVLFHYIENDLSELPKGLLEDVHQKSYIRKNHERTKLEYCFVVTDGIGILAVDTIGYTIPVRKSRLIPRQEQLVYEMVKDVEPETYEFEPKKLESSKEYHILSLAPEHVRGLTRKERQIKQLMFMALDQLKGLKNRAEIGYWYTEWNPHMYEQIKRMSFEEIWDMLYNETIEGWSDKHLAFCENLIKGQPFFEKLWEMENESKVN.

The protein belongs to the UPF0736 family.

The protein is UPF0736 protein YjbA (yjbA) of Bacillus subtilis (strain 168).